A 316-amino-acid chain; its full sequence is L-lactate dehydrogenase (316 aa).

Residues V15, D37, K42, Y68, and 82-83 (GL) contribute to the NAD(+) site. Substrate is bound by residues Q85, R91, and 123–126 (NPVD). NAD(+) is bound by residues 121 to 123 (ASN) and T146. Residue 151 to 154 (DTSR) coordinates substrate. Beta-D-fructose 1,6-bisphosphate-binding residues include R156 and H171. The Proton acceptor role is filled by H178. The residue at position 222 (Y222) is a Phosphotyrosine. T231 is a substrate binding site.

It belongs to the LDH/MDH superfamily. LDH family. Homotetramer.

Its subcellular location is the cytoplasm. It catalyses the reaction (S)-lactate + NAD(+) = pyruvate + NADH + H(+). It functions in the pathway fermentation; pyruvate fermentation to lactate; (S)-lactate from pyruvate: step 1/1. Allosterically activated by fructose 1,6-bisphosphate (FBP). Functionally, catalyzes the conversion of lactate to pyruvate. This is L-lactate dehydrogenase from Borreliella afzelii (strain PKo) (Borrelia afzelii).